A 71-amino-acid polypeptide reads, in one-letter code: Potassium voltage-gated channel subfamily E member 2 (71 aa).

Residues 7–27 form a helical membrane-spanning segment; sequence VILYLMVMIGMFSFIIVAILV. The Cytoplasmic portion of the chain corresponds to 28-71; the sequence is STVKSKRREHSNDPYHQYIVEDWQEKYKSQILHFEEAKATIHEN.

The protein belongs to the potassium channel KCNE family. As to quaternary structure, interacts with KCNB1. Associates with KCNH2/ERG1. May associate with KCNQ2 and KCNQ3. Associates with HCN1 and probably HCN2. Heteromultimer with KCNC2. Interacts with KCNC2. Interacts with KCNQ1; forms a heterooligomer complex that targets to the membrane raft and leading to currents with an apparently instantaneous activation, a rapid deactivation process and a linear current-voltage relationship and decreases the amplitude of the outward current. In terms of tissue distribution, detected in heart; expression is highest in the SA node and the right atrium, and barely detectable in the ventricle.

Its subcellular location is the cell membrane. The protein resides in the apical cell membrane. Functionally, ancillary protein that functions as a regulatory subunit of the voltage-gated potassium (Kv) channel complex composed of pore-forming and potassium-conducting alpha subunits and of regulatory beta subunits. KCNE2 beta subunit modulates the gating kinetics and enhances stability of the channel complex. Alters the gating of the delayed rectifier Kv channel containing KCNB1 alpha subunit. Associates with KCNH2/HERG alpha subunit Kv channel to form the rapidly activating component of the delayed rectifying potassium current (IKr) in heart. May associate with KCNQ2 and/or KCNQ3 alpha subunits to modulate the native M-type current. May associate with HCN1 and HCN2 channel subunits to increase potassium current. Forms a heterooligomer complex with KCNQ1/KVLQT1 alpha subunits which leads to currents with an apparently instantaneous activation, a rapid deactivation process and a linear current-voltage relationship and decreases the amplitude of the outward current. KCNQ1-KCNE2 channel associates with Na(+)-coupled myo-inositol symporter in the apical membrane of choroid plexus epithelium and regulates the myo-inositol gradient between blood and cerebrospinal fluid with an impact on neuron excitability. In Oryctolagus cuniculus (Rabbit), this protein is Potassium voltage-gated channel subfamily E member 2 (KCNE2).